The chain runs to 500 residues: Aromatic-L-amino-acid decarboxylase (500 aa).

P102 is an L-tryptophan binding site. Pyridoxal 5'-phosphate is bound at residue S168. L-tryptophan is bound at residue H203. T262 serves as a coordination point for pyridoxal 5'-phosphate. H318 provides a ligand contact to L-tryptophan. An N6-(pyridoxal phosphate)lysine modification is found at K319. Y348 is a binding site for L-tryptophan.

It belongs to the group II decarboxylase family. Homodimer. The cofactor is pyridoxal 5'-phosphate.

It catalyses the reaction L-tryptophan + H(+) = tryptamine + CO2. It carries out the reaction 5-hydroxy-L-tryptophan + H(+) = serotonin + CO2. Its function is as follows. Catalyzes the decarboxylation of L-tryptophan to tryptamine and L-5-hydroxytryptophan to serotonin, respectively. This is Aromatic-L-amino-acid decarboxylase from Catharanthus roseus (Madagascar periwinkle).